The following is a 596-amino-acid chain: Aspartate--tRNA(Asp/Asn) ligase (596 aa).

Glu172 is an L-aspartate binding site. Residues 196–199 (QLFK) form an aspartate region. Residue Arg218 participates in L-aspartate binding. ATP contacts are provided by residues 218 to 220 (RDE) and Gln227. Residue His450 participates in L-aspartate binding. Glu484 contributes to the ATP binding site. Arg491 provides a ligand contact to L-aspartate. ATP is bound at residue 536-539 (GLDR).

The protein belongs to the class-II aminoacyl-tRNA synthetase family. Type 1 subfamily. In terms of assembly, homodimer.

The protein localises to the cytoplasm. It carries out the reaction tRNA(Asx) + L-aspartate + ATP = L-aspartyl-tRNA(Asx) + AMP + diphosphate. In terms of biological role, aspartyl-tRNA synthetase with relaxed tRNA specificity since it is able to aspartylate not only its cognate tRNA(Asp) but also tRNA(Asn). Reaction proceeds in two steps: L-aspartate is first activated by ATP to form Asp-AMP and then transferred to the acceptor end of tRNA(Asp/Asn). The protein is Aspartate--tRNA(Asp/Asn) ligase of Acidithiobacillus ferrooxidans (strain ATCC 23270 / DSM 14882 / CIP 104768 / NCIMB 8455) (Ferrobacillus ferrooxidans (strain ATCC 23270)).